The sequence spans 418 residues: Zinc finger protein 566 (418 aa).

The KRAB domain occupies 6-77 (VMFSDVSVDF…DRELTRGQWP (72 aa)). The C2H2-type 1; degenerate zinc-finger motif lies at 169-193 (KFCASKEYRKTFRHGSQFATHEIIH). 7 consecutive C2H2-type zinc fingers follow at residues 199–221 (YECK…QKIH), 227–249 (FECK…HRIH), 255–277 (YECK…QRIH), 283–305 (YECK…QRIH), 311–333 (YECK…QRIH), 339–361 (YECK…QRIH), and 367–389 (YECK…HRIH). Glycyl lysine isopeptide (Lys-Gly) (interchain with G-Cter in SUMO2) cross-links involve residues Lys-314 and Lys-328.

It belongs to the krueppel C2H2-type zinc-finger protein family.

It is found in the nucleus. Its function is as follows. May be involved in transcriptional regulation. This is Zinc finger protein 566 (ZNF566) from Pan troglodytes (Chimpanzee).